We begin with the raw amino-acid sequence, 1400 residues long: Clustered mitochondria protein homolog (1400 aa).

Disordered regions lie at residues 1–39 (MVSKTDDIPASVPNCSPADFARDGETANSKGTTSKKEAS), 56–78 (GHDQAEEADSKQDGSGDADQAED), and 212–243 (GDTGKRKKKGSELEQIDCTPPEHILPGSKERP). The span at 56-69 (GHDQAEEADSKQDG) shows a compositional bias: basic and acidic residues. Residues 380–622 (RAEDAYTSRL…RTFPPDLNFL (243 aa)) enclose the Clu domain. Residues 684-741 (AALQDSNAAGAGSENKPLALESCDGTPDSPTSSESTLTPEDSEATTVSENSSAENQEA) form a disordered region. Low complexity predominate over residues 707-722 (DGTPDSPTSSESTLTP). Positions 727 to 741 (ATTVSENSSAENQEA) are enriched in polar residues. TPR repeat units lie at residues 1088–1121 (AFHFFQSGQAKVQQGFLKEGCELINEALNLFNNV), 1130–1163 (CACLRLLARLNYIMGDHPEALSNQQKAVLMSERV), 1172–1205 (IQEYMHLALYCFANGQLSTALKLLYRARYLMLVV), and 1214–1247 (ALLDSNIGLVLHGVMEYDLSLRFLENALAINTKY). Positions 1377-1388 (QDSGKIQEQQGS) are enriched in polar residues. The segment at 1377–1400 (QDSGKIQEQQGSHLELDDKLPVDD) is disordered. Over residues 1390-1400 (LELDDKLPVDD) the composition is skewed to basic and acidic residues.

The protein belongs to the CLU family.

The protein localises to the cytoplasm. Its function is as follows. mRNA-binding protein involved in proper cytoplasmic distribution of mitochondria. This Danio rerio (Zebrafish) protein is Clustered mitochondria protein homolog.